Reading from the N-terminus, the 484-residue chain is T-complex protein 1 subunit delta (484 aa).

The protein belongs to the TCP-1 chaperonin family. Component of the T-complex protein 1 (TCP1) complex.

It localises to the cytoplasm. Its function is as follows. Molecular chaperone; assists the folding of proteins upon ATP hydrolysis. The polypeptide is T-complex protein 1 subunit delta (CCT4) (Encephalitozoon cuniculi (strain GB-M1) (Microsporidian parasite)).